The sequence spans 521 residues: MSFTFLDWPRAEIFSSVSYLGLLLSGTVLYTVYKLIIAIYNYFFHPLRKIPGPPLASISWVPWYKYWFSGYMHRHVTRLHETYGPVVRIGPSEISFISATAWKDIYGLKRCRQIERDPQSFPSLTPNGARFDVLTYSPIDHAKYRKILNPCFSEKATREYERTIHENVDKLVAKLEQNISRGQKKNGSRENVTNWFQWLTFDMVTDVCWGRSFECVANEKSHVCLALSMDLVSYSSFIVFVAWWKGLKDFLVKLSGVEGLFVHLVRSKCEEHHLIAAGNELTGEKGKASIYSNLRAAGDPLDLAELDGNLTAIVIAGSETTGFALTATSYYLAKNPACFRRAASEVRSAFASAEEINDDALRKLPYLKAAIEEALRMTPAEPNGLARKVVVDGGLDIAGEWIPKGTAIYVSQFAANRSSAYFHLPNEYHPERWLGEECPKEFRTDKLDAVQPFIMGVNVCIGRGLAWMEMRVTLAKLLWHFDWTVKGGDGEAFEQAKAWHVWTKSHVNLQLHRRGALYGDL.

The chain crosses the membrane as a helical span at residues 19–39; it reads YLGLLLSGTVLYTVYKLIIAI. N-linked (GlcNAc...) asparagine glycans are attached at residues N178, N186, N191, N309, and N416. C460 provides a ligand contact to heme.

It belongs to the cytochrome P450 family. Heme serves as cofactor.

The protein localises to the membrane. It functions in the pathway antibiotic biosynthesis. Functionally, cytochrome P450 monooxygenase; part of the gene cluster that mediates the biosynthesis of sordarin and hypoxysordarin, glycoside antibiotics with a unique tetracyclic diterpene aglycone structure. First, the geranylgeranyl diphosphate synthase sdnC constructs GGDP from farnesyl diphosphate and isopentenyl diphosphate. The diterpene cyclase sdnA then catalyzes the cyclization of GGDP to afford cycloaraneosene. Cycloaraneosene is then hydroxylated four times by the putative cytochrome P450 monooxygenases sdnB, sdnE, sdnF and sdnH to give a hydroxylated cycloaraneosene derivative such as cycloaraneosene-8,9,13,19-tetraol. Although the order of the hydroxylations is unclear, at least C8, C9 and C13 of the cycloaraneosene skeleton are hydroxylated before the sordaricin formation. Dehydration of the 13-hydroxy group of the hydroxylated cycloaraneosene derivative might be catalyzed by an unassigned hypothetical protein such as sdnG and sdnP to construct the cyclopentadiene moiety. The FAD-dependent oxidoreductase sdnN is proposed to catalyze the oxidation at C9 of the hydroxylated cycloaraneosene derivative and also catalyze the Baeyer-Villiger oxidation to give the lactone intermediate. The presumed lactone intermediate would be hydrolyzed to give an acrolein moiety and a carboxylate moiety. Then, [4+2]cycloaddition would occur between the acrolein moiety and the cyclopentadiene moiety to give sordaricin. SdnN might also be involved in the [4+2]cycloaddition after the hypothesized oxidation to accommodate the oxidized product and prompt the [4+2]cycloaddition. GDP-6-deoxy-D-altrose may be biosynthesized from GDP-D-mannose by the putative GDP-mannose-4,6-dehydratase sdnI and the short-chain dehydrogenase sdnK. The glycosyltransferase sdnJ catalyzes the attachment of 6-deoxy-D-altrose onto the 19-hydroxy group of sordaricin to give 4'-O-demethylsordarin. The methyltransferase sdnD would complete the biosynthesis of sordarin. Sordarin can be further modified into hypoxysordarin. The unique acyl chain at the 3'-hydroxy group of hypoxysordarin would be constructed by an iterative type I PKS sdnO and the trans-acting polyketide methyltransferase sdnL. SdnL would be responsible for the introduction of an alpha-methyl group of the polyketide chain. Alternatively, the beta-lactamase-like protein sdnR might be responsible for the cleavage and transfer of the polyketide chain from the PKS sdnO to sordarin. Two putative cytochrome P450 monooxygenases, sdnQ and sdnT, might catalyze the epoxidations of the polyketide chain to complete the biosynthesis of hypoxysordarin. Transcriptional regulators sdnM and sdnS are presumably encoded for the transcriptional regulation of the expression of the sdn gene cluster. In Sordaria araneosa (Pleurage araneosa), this protein is Cytochrome P450 monooxygenase sdnF.